Reading from the N-terminus, the 723-residue chain is Pentatricopeptide repeat-containing protein At5g50280, chloroplastic (723 aa).

The transit peptide at 1–44 (MSMASSSLATQSFFSSFPLSHRLHFPVPYLLLRSSFFRKPLSLS) directs the protein to the chloroplast. Residues 70-97 (IQQPENSTINSEESECEEEDDEEGDDFT) form a disordered region. The segment covering 81–97 (EESECEEEDDEEGDDFT) has biased composition (acidic residues). 11 PPR repeats span residues 272 to 306 (DVRL…NVYP), 307 to 342 (DNVT…GVKW), 343 to 377 (SQDV…GIRS), 378 to 412 (NTIV…GLKP), 413 to 447 (SAAT…GLEP), 448 to 483 (NVKS…GLKP), 484 to 518 (SSHS…GIKP), 519 to 553 (SVET…KIKG), 554 to 588 (TRIT…GLQP), 589 to 623 (SVMT…NLKP), and 624 to 658 (DSIT…GQVP). A disordered region spans residues 700–723 (TKGKKDEFWKYKTNRTTSPGRHRS). The span at 713–723 (NRTTSPGRHRS) shows a compositional bias: polar residues.

Belongs to the PPR family. P subfamily.

Its subcellular location is the plastid. The protein resides in the chloroplast. In Arabidopsis thaliana (Mouse-ear cress), this protein is Pentatricopeptide repeat-containing protein At5g50280, chloroplastic (EMB1006).